The chain runs to 220 residues: DNA replication complex GINS protein SLD5 (220 aa).

This sequence belongs to the GINS4/SLD5 family. In terms of assembly, component of the GINS complex. Interacts with EOL1 in the nucleus.

The protein localises to the nucleus. Functionally, the GINS complex plays an essential role in the initiation of DNA replication. Required during embryogenesis. This is DNA replication complex GINS protein SLD5 from Arabidopsis thaliana (Mouse-ear cress).